Here is a 70-residue protein sequence, read N- to C-terminus: Small ribosomal subunit protein bS18c (70 aa).

Belongs to the bacterial ribosomal protein bS18 family. As to quaternary structure, part of the 30S ribosomal subunit.

Its subcellular location is the plastid. The protein resides in the chloroplast. The polypeptide is Small ribosomal subunit protein bS18c (Gracilaria tenuistipitata var. liui (Red alga)).